Consider the following 417-residue polypeptide: Equilibrative nucleotide transporter 7 (417 aa).

The next 11 membrane-spanning stretches (helical) occupy residues 19–39 (LVCC…LTIT), 54–74 (VLTI…ATKE), 84–104 (IFGY…DLAS), 110–130 (VVAY…DAFV), 143–163 (PDFI…TSVL), 184–204 (LFIG…TLVF), 264–284 (LGIN…GFLY), 293–315 (GDWY…RFIP), 326–346 (KWIT…YFTA), 353–373 (WMLF…VCIF), and 392–412 (MCVF…LWLI).

Belongs to the SLC29A/ENT transporter (TC 2.A.57) family. In terms of tissue distribution, expressed in leaves and flowers.

The protein resides in the cell membrane. Nucleoside transporter that can mediate uptake of adenosine, uridine, guanosine or cytidine when expressed in a heterologous system (yeast). This is Equilibrative nucleotide transporter 7 (ENT7) from Arabidopsis thaliana (Mouse-ear cress).